A 194-amino-acid chain; its full sequence is Der GTPase-activating protein YihI (194 aa).

Positions Met-1 to Gly-81 are disordered. Composition is skewed to basic and acidic residues over residues Arg-9–Pro-23 and Thr-36–Glu-47. Residues Gly-59–Ala-70 are compositionally biased toward polar residues.

The protein belongs to the YihI family. Interacts with Der.

A GTPase-activating protein (GAP) that modifies Der/EngA GTPase function. May play a role in ribosome biogenesis. This Haemophilus ducreyi (strain 35000HP / ATCC 700724) protein is Der GTPase-activating protein YihI.